Here is a 292-residue protein sequence, read N- to C-terminus: MNSNSNKKRDPARFPAGVAQGCSTTRAGDLKHRRKHPFEKFFAQNSALFAQRFPDLARALTLPNEQLLQRIPPDYLLAAAHDGDATLAVRGTYLHSKYRPRQEAARLISQDFFTHAIAKGGYVGAGLGLGYVAELYAQQHPTHTVVLIEPDIFVFLLFLASRPLTPLLRHERLKILPAQTVPDVLQFLRATGDVSLPLFHFLPAQELNTAWFHDFTQAHRHATAQAETNKQTLQRFGPLWIRNTIKNAAQLCVRTPVNALRNCAAGSTALIIAGGPGVDASISFLPYLKKKH.

A signal peptide spans 1–21 (MNSNSNKKRDPARFPAGVAQG). Residues 1–30 (MNSNSNKKRDPARFPAGVAQGCSTTRAGDL) are disordered.

This is an uncharacterized protein from Treponema pallidum (strain Nichols).